An 88-amino-acid polypeptide reads, in one-letter code: Probable glutaredoxin ssr2061 (88 aa).

A disulfide bridge links C15 with C18.

Belongs to the glutaredoxin family.

Has a glutathione-disulfide oxidoreductase activity in the presence of NADPH and glutathione reductase. Reduces low molecular weight disulfides and proteins. The chain is Probable glutaredoxin ssr2061 from Synechocystis sp. (strain ATCC 27184 / PCC 6803 / Kazusa).